The sequence spans 299 residues: tRNA dimethylallyltransferase (299 aa).

An ATP-binding site is contributed by 8–15; the sequence is GPTASGKT. 10-15 is a substrate binding site; that stretch reads TASGKT. An interaction with substrate tRNA region spans residues 33 to 36; it reads DSQQ.

This sequence belongs to the IPP transferase family. As to quaternary structure, monomer. The cofactor is Mg(2+).

The enzyme catalyses adenosine(37) in tRNA + dimethylallyl diphosphate = N(6)-dimethylallyladenosine(37) in tRNA + diphosphate. In terms of biological role, catalyzes the transfer of a dimethylallyl group onto the adenine at position 37 in tRNAs that read codons beginning with uridine, leading to the formation of N6-(dimethylallyl)adenosine (i(6)A). The polypeptide is tRNA dimethylallyltransferase (Anaeromyxobacter dehalogenans (strain 2CP-C)).